Reading from the N-terminus, the 97-residue chain is UPF0235 protein APP7_1431 (97 aa).

It belongs to the UPF0235 family.

This Actinobacillus pleuropneumoniae serotype 7 (strain AP76) protein is UPF0235 protein APP7_1431.